The primary structure comprises 320 residues: Cytochrome f (320 aa).

The signal sequence occupies residues 1 to 35 (MQTRNAFSWLKKQITRSISVSLMIYILTRTSISSA). Y36, C56, C59, and H60 together coordinate heme. The helical transmembrane segment at 286-305 (VQGLLFFLASVILAQIFLVL) threads the bilayer.

This sequence belongs to the cytochrome f family. The 4 large subunits of the cytochrome b6-f complex are cytochrome b6, subunit IV (17 kDa polypeptide, petD), cytochrome f and the Rieske protein, while the 4 small subunits are PetG, PetL, PetM and PetN. The complex functions as a dimer. Heme is required as a cofactor.

It localises to the plastid. Its subcellular location is the chloroplast thylakoid membrane. Functionally, component of the cytochrome b6-f complex, which mediates electron transfer between photosystem II (PSII) and photosystem I (PSI), cyclic electron flow around PSI, and state transitions. In Atropa belladonna (Belladonna), this protein is Cytochrome f.